Here is a 442-residue protein sequence, read N- to C-terminus: MEPKFHAFMFPWFAFGHMIPFLHLANKLAEKGHRVTFLLPKKAQKQLEHHNLFPDSIVFHPLTVPPVNGLPAGAETTSDIPISLDNLLSKALDLTRDQVEAAVRALRPDLIFFDFAQWIPDMAKEHMIKSVSYIIVSATTIAHTHVPGGKLGVRPPGYPSSKVMFRENDVHALATLSIFYKRLYHQITTGLKSCDVIALRTCKEVEGMFCDFISRQYHKKVLLTGPMFPEPDTSKPLEERWNHFLSGFAPKSVVFCSPGSQVILEKDQFQELCLGMELTGLPFLLAVKPPRGSSTVQEGLPEGFEERVKDRGVVWGGWVQQPLILAHPSIGCFVNHCGPGTIWESLVSDCQMVLIPFLSDQVLFTRLMTEEFEVSVEVPREKTGWFSKESLSNAIKSVMDKDSDIGKLVRSNHTKLKEILVSPGLLTGYVDHFVEGLQENLI.

UDP-alpha-D-glucose contacts are provided by residues S260, 319–321, 336–344, and 358–361; these read VQQ, HCGPGTIWE, and LSDQ.

This sequence belongs to the UDP-glycosyltransferase family.

The chain is UDP-glycosyltransferase 79B7 (UGT79B7) from Arabidopsis thaliana (Mouse-ear cress).